The following is a 717-amino-acid chain: SAGA factor-like TAF6 (717 aa).

Residues Lys-123–Ser-204 are sufficient for interaction with Taf9.

It belongs to the TAF6 family. In terms of assembly, component of the Spt-Ada-Gcn5 acetyltransferase (SAGA) complex consisting of wda/Taf5L, Saf6, Taf9, Taf10b, Taf12, Ada1, Spt3, Spt7, Spt20, Sf3b3, Sf3b5, Nipped-A/Tra1, a histone acetyltransferase (HAT) module made up of Gcn5, Ada2b (Isoform B), Ada3 and Sgf29, and a deubiquitinase (DUB) module made up of not/nonstop, Sgf11 and e(y)2 tethered to SAGA by Atxn7; not essential for SAGA complex assembly, histone-modifying activity or chromosomal recruitment. Interacts (via N-terminal histone-fold domain) with Taf9 (via N-terminal histone-fold domain); the interaction is probably direct. Probably forms a histone-like heterooctamer structure with Taf9, Taf12 and Taf10b.

The protein localises to the nucleus. It is found in the chromosome. Component of the transcription regulatory complex SAGA, a multiprotein complex that activates transcription by remodeling chromatin and mediating histone acetylation and deubiquitination. The SAGA complex predominantly acetylates histone H3. Involved in SAGA complex coactivator function but not essential for SAGA complex assembly, histone-modifying activity or chromosomal recruitment. Required for oogenesis; involved in transcriptional activation. This chain is SAGA factor-like TAF6, found in Drosophila melanogaster (Fruit fly).